Consider the following 255-residue polypeptide: L-erythrulose-1-phosphate isomerase (255 aa).

The Electrophile role is filled by His98. Glu171 acts as the Proton acceptor in catalysis. Gly177 and Ser214 together coordinate substrate.

The protein belongs to the triosephosphate isomerase family. Homodimer.

It localises to the cytoplasm. The enzyme catalyses L-erythrulose 1-phosphate = D-erythrulose 4-phosphate. It participates in carbohydrate metabolism; erythritol degradation. Functionally, catalyzes the isomerization of D-erythrulose-4P to L-erythrulose-1P. The sequence is that of L-erythrulose-1-phosphate isomerase from Rhizobium meliloti (strain 1021) (Ensifer meliloti).